The sequence spans 2813 residues: A-kinase anchor protein 13 (2813 aa).

Disordered stretches follow at residues 304–400 (AQDP…QDSC) and 415–439 (LSSCGNRNEETGTKSSGMPTDQESL). Over residues 427-439 (TKSSGMPTDQESL) the composition is skewed to polar residues. Positions 494–516 (WKNVLQGGESTKERFENSNIGTA) are important for interaction with PRKAR2A. Disordered regions lie at residues 539-585 (AASS…VDQN), 632-653 (HQNSETNSSHAQSQKGKSSPIC), and 690-726 (SESTTARQPSSQDPPDASHCEDPQAHTVTSDPVRDTQ). The span at 561–577 (STEKTAETETSRSREES) shows a compositional bias: basic and acidic residues. The segment covering 690 to 702 (SESTTARQPSSQD) has biased composition (polar residues). Residue Ser-790 is modified to Phosphoserine. 2 disordered regions span residues 805-856 (VPSQ…AAEL) and 939-965 (ENALSSGTLQEEQRTPPPGQDTQQFHE). A Phosphothreonine modification is found at Thr-815. Residues 835-844 (PDTRPLEDRA) are compositionally biased toward basic and acidic residues. Composition is skewed to polar residues over residues 847 to 856 (LSTSSTAAEL) and 939 to 948 (ENALSSGTLQ). Residue Thr-953 is modified to Phosphothreonine. Phosphoserine is present on Ser-983. 2 disordered regions span residues 1431–1455 (GVLKRESGSDSDLFHSPSDDMDSII) and 1467–1542 (DITG…DSIT). Low complexity predominate over residues 1467–1478 (DITGSSSSTDDT). Over residues 1488 to 1497 (GSDVSLSQIL) the composition is skewed to polar residues. Ser-1489, Ser-1507, Ser-1540, Ser-1565, and Ser-1602 each carry phosphoserine. Residues 1525–1540 (SEPADPGDVEEEEMDS) show a composition bias toward acidic residues. The interval 1585–1715 (RVLGDVVRRP…HSTFHNTSAN (131 aa)) is important for interaction with MAP2K3. Residues 1601 to 1638 (FSLEGLTGGAGVGNKPSSSLEVSSANAEELRHPFSGEE) are disordered. The segment covering 1615 to 1626 (KPSSSLEVSSAN) has biased composition (polar residues). Residues 1628–1638 (EELRHPFSGEE) are compositionally biased toward basic and acidic residues. Ser-1642, Ser-1645, and Ser-1647 each carry phosphoserine. At Lys-1670 the chain carries N6-methyllysine. The disordered stretch occupies residues 1755 to 1793 (KMSSSKKSKEKEKEKDKIKEKEKDSKDKEKDKKTVNGHT). A coiled-coil region spans residues 1758-1790 (SSKKSKEKEKEKDKIKEKEKDSKDKEKDKKTVN). The span at 1761 to 1788 (KSKEKEKEKDKIKEKEKDSKDKEKDKKT) shows a compositional bias: basic and acidic residues. A Phorbol-ester/DAG-type zinc finger spans residues 1791–1838 (GHTFSSIPVVGPISCSQCMKPFTNKDAYTCANCSAFVHKGCRESLASC). Ser-1876, Ser-1895, and Ser-1929 each carry phosphoserine. The interval 1919–2813 (MSNTWKFLSH…VSAEGEEIFC (895 aa)) is interaction with ESR1. Thr-1930 bears the Phosphothreonine mark. Phosphoserine is present on residues Ser-1932 and Ser-1945. Residues 1994–2191 (KRQEVIYELM…KDVIGAVDSK (198 aa)) form the DH domain. One can recognise a PH domain in the interval 2231–2333 (KLVRDGSVFL…WIQIIQDTIN (103 aa)). Residues Ser-2345 and Ser-2398 each carry the phosphoserine modification. Residues 2345 to 2381 (SENEEEKKMLDTRARELKEQLHQKDQKILLLLEEKEM) are a coiled coil. Residues 2466–2502 (ETFGGFDSHQMNASKGGEKEEGDDGQDLRRTESDSGL) are disordered. Thr-2467 bears the Phosphothreonine mark. The residue at position 2473 (Ser-2473) is a Phosphoserine. Residues 2491 to 2502 (QDLRRTESDSGL) are compositionally biased toward basic and acidic residues. Ser-2563 and Ser-2566 each carry phosphoserine. Residues 2568-2683 (LIEQEKQRSL…RLSQRQTERD (116 aa)) adopt a coiled-coil conformation. Basic and acidic residues predominate over residues 2665–2684 (QEQLRREAERLSQRQTERDL). The tract at residues 2665-2813 (QEQLRREAER…VSAEGEEIFC (149 aa)) is disordered. Residues Ser-2703, Ser-2709, and Ser-2728 each carry the phosphoserine modification. Polar residues predominate over residues 2720–2735 (SLDSELSVSPKRNSIS). Residues 2760–2771 (QSQAPASTSAST) show a composition bias toward low complexity.

In terms of assembly, interacts with the cAMP-dependent protein kinase (PKA) holoenzyme and with the regulatory subunit PRKAR2A. Interacts with RHOA. Also interacts with RHOB and RHOC. Identified in a ternary complex with RHOA and PRKAR2A. Identified in a complex with NR3C1 and RHOA. Interacts with BRAF and KSR1. Identified in a complex with BRAF and KSR1. Component of a signaling complex containing at least AKAP13, PKN1, MAPK14, ZAK and MAP2K3. Within this complex, AKAP13 interacts directly with PKN1, which in turn recruits MAPK14, MAP2K3 and ZAK. Interacts (phosphorylated form) with YWHAB and YWHAZ. Interaction with YWHAB inhibits activation of RHOA, interferes with PKN1 binding and activation of MAP kinases. Interacts with GNA12. Interacts with IKBKB. Interacts with ESR1, THRA, PPARA and NME2. Interacts (via the C-terminal domain after the PH domain) with MEF2C and RXRB. Interacts (via the C-terminal domain after the PH domain) with PRKD1. As to expression, detected in mammary gland. Detected in heart (at protein level). Expressed as a 5.3 kb transcript in hematopoietic cells, skeletal muscle, lung, heart, estrogen-responsive reproductive tissues, including breast ductal epithelium. Also found in testis and breast cancer cell lines. Predominantly expressed as a 10 kb transcript in the heart and at lower levels in the lung, placenta, kidney, pancreas, skeletal muscle and liver. Transcripts of between 6-9 kb are also expressed in myeloid and lymphoid lineages, a variety of epithelial tissues, and in skeletal muscle.

It localises to the cytoplasm. It is found in the cytosol. Its subcellular location is the cell cortex. The protein resides in the nucleus. The protein localises to the membrane. Its function is as follows. Scaffold protein that plays an important role in assembling signaling complexes downstream of several types of G protein-coupled receptors. Activates RHOA in response to signaling via G protein-coupled receptors via its function as Rho guanine nucleotide exchange factor. May also activate other Rho family members. Part of a kinase signaling complex that links ADRA1A and ADRA1B adrenergic receptor signaling to the activation of downstream p38 MAP kinases, such as MAPK11 and MAPK14. Part of a signaling complex that links ADRA1B signaling to the activation of RHOA and IKBKB/IKKB, leading to increased NF-kappa-B transcriptional activity. Part of a RHOA-dependent signaling cascade that mediates responses to lysophosphatidic acid (LPA), a signaling molecule that activates G-protein coupled receptors and potentiates transcriptional activation of the glucocorticoid receptor NR3C1. Part of a signaling cascade that stimulates MEF2C-dependent gene expression in response to lysophosphatidic acid (LPA). Part of a signaling pathway that activates MAPK11 and/or MAPK14 and leads to increased transcription activation of the estrogen receptors ESR1 and ESR2. Part of a signaling cascade that links cAMP and EGFR signaling to BRAF signaling and to PKA-mediated phosphorylation of KSR1, leading to the activation of downstream MAP kinases, such as MAPK1 or MAPK3. Functions as a scaffold protein that anchors cAMP-dependent protein kinase (PKA) and PRKD1. This promotes activation of PRKD1, leading to increased phosphorylation of HDAC5 and ultimately cardiomyocyte hypertrophy. Has no guanine nucleotide exchange activity on CDC42, Ras or Rac. Required for normal embryonic heart development, and in particular for normal sarcomere formation in the developing cardiomyocytes. Plays a role in cardiomyocyte growth and cardiac hypertrophy in response to activation of the beta-adrenergic receptor by phenylephrine or isoproterenol. Required for normal adaptive cardiac hypertrophy in response to pressure overload. Plays a role in osteogenesis. In Homo sapiens (Human), this protein is A-kinase anchor protein 13 (AKAP13).